We begin with the raw amino-acid sequence, 321 residues long: Ribose-phosphate pyrophosphokinase (321 aa).

ATP-binding positions include 44 to 46 (DGE) and 103 to 104 (RQ). Mg(2+) is bound by residues His-137 and Asp-179. The active site involves Lys-202. D-ribose 5-phosphate is bound by residues Arg-204, Asp-228, and 232–236 (DTAGT).

Belongs to the ribose-phosphate pyrophosphokinase family. Class I subfamily. Homohexamer. The cofactor is Mg(2+).

It localises to the cytoplasm. It catalyses the reaction D-ribose 5-phosphate + ATP = 5-phospho-alpha-D-ribose 1-diphosphate + AMP + H(+). It functions in the pathway metabolic intermediate biosynthesis; 5-phospho-alpha-D-ribose 1-diphosphate biosynthesis; 5-phospho-alpha-D-ribose 1-diphosphate from D-ribose 5-phosphate (route I): step 1/1. Its function is as follows. Involved in the biosynthesis of the central metabolite phospho-alpha-D-ribosyl-1-pyrophosphate (PRPP) via the transfer of pyrophosphoryl group from ATP to 1-hydroxyl of ribose-5-phosphate (Rib-5-P). The chain is Ribose-phosphate pyrophosphokinase from Staphylococcus saprophyticus subsp. saprophyticus (strain ATCC 15305 / DSM 20229 / NCIMB 8711 / NCTC 7292 / S-41).